A 966-amino-acid chain; its full sequence is Phosphoenolpyruvate carboxylase, housekeeping isozyme (966 aa).

Serine 11 is modified (phosphoserine). Catalysis depends on residues histidine 172 and lysine 601.

Belongs to the PEPCase type 1 family. As to quaternary structure, homotetramer. Mg(2+) serves as cofactor.

Its subcellular location is the cytoplasm. The catalysed reaction is oxaloacetate + phosphate = phosphoenolpyruvate + hydrogencarbonate. Its activity is regulated as follows. By light-reversible phosphorylation. Its function is as follows. Through the carboxylation of phosphoenolpyruvate (PEP) it forms oxaloacetate, a four-carbon dicarboxylic acid source for the tricarboxylic acid cycle. The polypeptide is Phosphoenolpyruvate carboxylase, housekeeping isozyme (Saccharum hybrid (Sugarcane)).